The primary structure comprises 91 residues: Putative antitoxin YutD (91 aa).

An intrachain disulfide couples Cys77 to Cys81.

As to quaternary structure, homodimer, probably forms a complex with cognate toxin YutE.

In terms of biological role, probable antitoxin component of a putative type VII toxin-antitoxin (TA) system. Probably neutralizes cognate toxin YutE. This is Putative antitoxin YutD (yutD) from Bacillus subtilis (strain 168).